Consider the following 509-residue polypeptide: MPSGFQQIGSDDGEPPRQRVTGTLVLAVFSAVLGSLQFGYNIGVINAPQKVIEQSYNATWLGRQGPGGPDSIPQGTLTTLWALSVAIFSVGGMISSFLIGIISQWLGRKRAMLANNVLAVLGGALMGLANAAASYEILILGRFLIGAYSGLTSGLVPMYVGEIAPTHLRGALGTLNQLAIVIGILVAQVLGLESMLGTATLWPLLLALTVLPALLQLILLPFCPESPRYLYIIRNLEGPARKSLKRLTGWADVSDALAELKDEKRKLERERPMSLLQLLGSRTHRQPLIIAVVLQLSQQLSGINAVFYYSTSIFESAGVGQPAYATIGAGVVNTVFTLVSVLLVERAGRRTLHLLGLAGMCGCAILMTVALLLLERVPAMSYVSIVAIFGFVAFFEIGPGPIPWFIVAELFSQGPRPAAMAVAGFSNWTCNFIVGMGFQYVADAMGPYVFLLFAVLLLGFFIFTFLKVPETRGRTFDQISAAFRRTPSLLEQEVKPSTELEYLGPDEND.

Residues 1–23 (MPSGFQQIGSDDGEPPRQRVTGT) are Cytoplasmic-facing. The segment at 7 to 13 (QIGSDDG) is interaction with SRFBP1. Position 10 is a phosphoserine (S10). The chain crosses the membrane as a helical span at residues 24-44 (LVLAVFSAVLGSLQFGYNIGV). The Extracellular segment spans residues 45 to 80 (INAPQKVIEQSYNATWLGRQGPGGPDSIPQGTLTTL). Residue N57 is glycosylated (N-linked (GlcNAc...) asparagine). A helical membrane pass occupies residues 81–101 (WALSVAIFSVGGMISSFLIGI). At 102–110 (ISQWLGRKR) the chain is on the cytoplasmic side. The helical transmembrane segment at 111–131 (AMLANNVLAVLGGALMGLANA) threads the bilayer. At 132 to 141 (AASYEILILG) the chain is on the extracellular side. A helical transmembrane segment spans residues 142-162 (RFLIGAYSGLTSGLVPMYVGE). Topologically, residues 163 to 170 (IAPTHLRG) are cytoplasmic. Residues 171-191 (ALGTLNQLAIVIGILVAQVLG) traverse the membrane as a helical segment. Q177 contributes to the D-glucose binding site. The Extracellular segment spans residues 192–200 (LESMLGTAT). A helical membrane pass occupies residues 201 to 221 (LWPLLLALTVLPALLQLILLP). The Cytoplasmic segment spans residues 222-286 (FCPESPRYLY…QLLGSRTHRQ (65 aa)). Residue C223 is the site of S-palmitoyl cysteine attachment. S274 carries the post-translational modification Phosphoserine; by SGK1. Residues 287-307 (PLIIAVVLQLSQQLSGINAVF) form a helical membrane-spanning segment. D-glucose is bound by residues 298 to 299 (QQ) and N304. Residues 308–322 (YYSTSIFESAGVGQP) are Extracellular-facing. A helical membrane pass occupies residues 323-343 (AYATIGAGVVNTVFTLVSVLL). N333 contacts D-glucose. Topologically, residues 344 to 352 (VERAGRRTL) are cytoplasmic. A helical membrane pass occupies residues 353 to 373 (HLLGLAGMCGCAILMTVALLL). Over 374 to 384 (LERVPAMSYVS) the chain is Extracellular. A helical membrane pass occupies residues 385–405 (IVAIFGFVAFFEIGPGPIPWF). D-glucose is bound by residues E396 and W404. At 406–416 (IVAELFSQGPR) the chain is on the cytoplasmic side. Residues 417 to 437 (PAAMAVAGFSNWTCNFIVGMG) form a helical membrane-spanning segment. Topologically, residues 438-444 (FQYVADA) are extracellular. The helical transmembrane segment at 445–465 (MGPYVFLLFAVLLLGFFIFTF) threads the bilayer. The Cytoplasmic segment spans residues 466–508 (LKVPETRGRTFDQISAAFRRTPSLLEQEVKPSTELEYLGPDEN). T486 is subject to Phosphothreonine. The residue at position 488 (S488) is a Phosphoserine. The short motif at 489-490 (LL) is the Dileucine internalization motif element.

Belongs to the major facilitator superfamily. Sugar transporter (TC 2.A.1.1) family. Glucose transporter subfamily. As to quaternary structure, binds to DAXX. Interacts via its N-terminus with SRFBP1. Interacts with NDUFA9. Interacts with TRARG1; the interaction is required for proper SLC2A4 recycling after insulin stimulation. In terms of processing, sumoylated. Post-translationally, palmitoylated. Palmitoylation by ZDHHC7 controls the insulin-dependent translocation of GLUT4 to the plasma membrane. As to expression, expressed in skeletal and cardiac muscles. Expressed in brown and white adipose tissues.

It localises to the cell membrane. The protein resides in the endomembrane system. It is found in the cytoplasm. Its subcellular location is the perinuclear region. The catalysed reaction is D-glucose(out) = D-glucose(in). Functionally, insulin-regulated facilitative glucose transporter, which plays a key role in removal of glucose from circulation. Response to insulin is regulated by its intracellular localization: in the absence of insulin, it is efficiently retained intracellularly within storage compartments in muscle and fat cells. Upon insulin stimulation, translocates from these compartments to the cell surface where it transports glucose from the extracellular milieu into the cell. The polypeptide is Solute carrier family 2, facilitated glucose transporter member 4 (Mus musculus (Mouse)).